We begin with the raw amino-acid sequence, 98 residues long: NADH-ubiquinone oxidoreductase chain 4L (98 aa).

The next 3 membrane-spanning stretches (helical) occupy residues 1–21, 29–49, and 61–81; these read MPSI…GMLV, SLLC…LTAL, and IILL…LVMV.

It belongs to the complex I subunit 4L family. Core subunit of respiratory chain NADH dehydrogenase (Complex I) which is composed of 45 different subunits.

It is found in the mitochondrion inner membrane. It carries out the reaction a ubiquinone + NADH + 5 H(+)(in) = a ubiquinol + NAD(+) + 4 H(+)(out). Functionally, core subunit of the mitochondrial membrane respiratory chain NADH dehydrogenase (Complex I) which catalyzes electron transfer from NADH through the respiratory chain, using ubiquinone as an electron acceptor. Part of the enzyme membrane arm which is embedded in the lipid bilayer and involved in proton translocation. This chain is NADH-ubiquinone oxidoreductase chain 4L (MT-ND4L), found in Oryctolagus cuniculus (Rabbit).